Reading from the N-terminus, the 321-residue chain is MRIGILTAGGDAPGMNAVIRAVVRSAEREGHEVIGIKRGYKGLIEGDFIKLTSRDVGGILDRGGTILLSSRDPRYKKLEYREKAYKNLNEQGIEALIILGGEGTLAGAKLTAEETGIPVIGVPCTIDNDVGGTEYCIGYDTALRNAVDAIDKIRDTASSHERIFIVEVMGRNRGFIAVEAGLATGAELILIPEERFPREQIPEEIEKAKKLGKLHFIIVLAEGYCRAKELEDFLLEKIGDKYGEIRSTVLGHIQRGGIPTHFDRIMGTKFGVVAYESLIAGERSGFVAYEKGKFYIEDFEKAQEYKPIDREAYKLNTRLAI.

ATP is bound at residue Gly-10. An ADP-binding site is contributed by 20–24 (RAVVR). ATP is bound by residues 71-72 (RD) and 101-104 (GEGT). Glu-102 is a Mg(2+) binding site. 125-127 (TID) contacts substrate. The Proton acceptor role is filled by Asp-127. Arg-154 is an ADP binding site. Substrate-binding positions include Arg-162 and 169–171 (MGR). Residues 185–187 (GAE) and 213–215 (KLH) contribute to the ADP site. Substrate-binding positions include Glu-222, Arg-246, and 252 to 255 (HIQR).

It belongs to the phosphofructokinase type A (PFKA) family. ATP-dependent PFK group I subfamily. Prokaryotic clade 'B1' sub-subfamily. As to quaternary structure, homotetramer. The cofactor is Mg(2+).

It localises to the cytoplasm. It catalyses the reaction beta-D-fructose 6-phosphate + ATP = beta-D-fructose 1,6-bisphosphate + ADP + H(+). The protein operates within carbohydrate degradation; glycolysis; D-glyceraldehyde 3-phosphate and glycerone phosphate from D-glucose: step 3/4. Allosterically activated by ADP and other diphosphonucleosides, and allosterically inhibited by phosphoenolpyruvate. In terms of biological role, catalyzes the phosphorylation of D-fructose 6-phosphate to fructose 1,6-bisphosphate by ATP, the first committing step of glycolysis. The chain is ATP-dependent 6-phosphofructokinase from Aquifex aeolicus (strain VF5).